Consider the following 180-residue polypeptide: Large ribosomal subunit protein uL6 (180 aa).

This sequence belongs to the universal ribosomal protein uL6 family. Part of the 50S ribosomal subunit.

Its function is as follows. This protein binds to the 23S rRNA, and is important in its secondary structure. It is located near the subunit interface in the base of the L7/L12 stalk, and near the tRNA binding site of the peptidyltransferase center. The protein is Large ribosomal subunit protein uL6 of Borrelia hermsii (strain HS1 / DAH).